Reading from the N-terminus, the 474-residue chain is MVLLPPSLPVCQLKVTAPEFPSNFYLDGDHSGFVGIETRQNPHPSASRNPYGHDAGVTDFLSNVSRFQIIESTLREGEQFANAFFDTAKKIEIAKALDDFGVDYIELTSPCASEQSRADCEAICKLGLKAKILTHIRCHMDDARIAVETGVDGVDVVIGTSSYLREHSHGKDMTYIKNAAIEVIEFVKSKGIEIRFSSEDSFRSDLVDLLSIYSAVDKVGVNRVGIADTVGCASPRQVYELVRVLRGVVGCDIETHFHNDTGCAIANAFCALEAGATHIDTSVLGIGERNGITPLGGLMARMMVADREYVKSKYKLEKLKEIEDLVAEAVEVNIPFNNYITGFCAFTHKAGIHAKAILNNPSTYEIINPADFGMSRYVHFASRLTGWNAIKSRAQQLKLEMTDTQYKECTAKIKAMADIRPIAVDDADSIIRAYHRNLKSGENKPLLDLTAEEQAAFAAKEKELLEAQAAGLPV.

The 254-residue stretch at 67-320 folds into the Pyruvate carboxyltransferase domain; the sequence is FQIIESTLRE…KSKYKLEKLK (254 aa). Arg75 contributes to the 2-oxoglutarate binding site. Residue Glu76 participates in Mg(2+) binding. Residues His135, Arg195, and Thr229 each coordinate 2-oxoglutarate. 2 residues coordinate Mg(2+): His256 and His258. Catalysis depends on His353, which acts as the Proton acceptor.

This sequence belongs to the alpha-IPM synthase/homocitrate synthase family. Homocitrate synthase LYS20/LYS21 subfamily. Requires Mg(2+) as cofactor. Mn(2+) serves as cofactor.

It localises to the mitochondrion. It carries out the reaction acetyl-CoA + 2-oxoglutarate + H2O = (2R)-homocitrate + CoA + H(+). The protein operates within amino-acid biosynthesis; L-lysine biosynthesis via AAA pathway; L-alpha-aminoadipate from 2-oxoglutarate: step 1/5. Catalyzes the aldol-type condensation of 2-oxoglutarate with acetyl-CoA to yield homocitrate. Carries out the first step of the alpha-aminoadipate (AAA) lysine biosynthesis pathway. This Penicillium rubens (strain ATCC 28089 / DSM 1075 / NRRL 1951 / Wisconsin 54-1255) (Penicillium chrysogenum) protein is Homocitrate synthase, mitochondrial (lys1).